A 308-amino-acid polypeptide reads, in one-letter code: uncharacterized protein (308 aa).

NADP(+) is bound by residues L50, D90, N117, Y182, K186, I222, and T224. Residue Y182 is the Proton acceptor of the active site. K186 acts as the Lowers pKa of active site Tyr in catalysis.

The protein belongs to the short-chain dehydrogenases/reductases (SDR) family.

This is an uncharacterized protein from Saccharomyces cerevisiae (strain ATCC 204508 / S288c) (Baker's yeast).